Consider the following 255-residue polypeptide: Hydroxyacylglutathione hydrolase (255 aa).

Zn(2+) contacts are provided by H55, H57, D59, H60, H113, D132, and H170.

It belongs to the metallo-beta-lactamase superfamily. Glyoxalase II family. In terms of assembly, monomer. Zn(2+) is required as a cofactor.

The catalysed reaction is an S-(2-hydroxyacyl)glutathione + H2O = a 2-hydroxy carboxylate + glutathione + H(+). It functions in the pathway secondary metabolite metabolism; methylglyoxal degradation; (R)-lactate from methylglyoxal: step 2/2. Functionally, thiolesterase that catalyzes the hydrolysis of S-D-lactoyl-glutathione to form glutathione and D-lactic acid. This Methylobacterium sp. (strain 4-46) protein is Hydroxyacylglutathione hydrolase.